The sequence spans 196 residues: MSQPIKLLVGLANPGPEYAKTRHNAGAWVVEELARIHNVTLKNEPKFFGLTGRLLINSQELRVLIPTTFMNLSGKAIAALANFYQIKPEEIMVAHDELDLPPGVAKFKQGGGHGGHNGLKDTISKLGNNKEFYRLRLGIGHPGHKDKVAGYVLGKAPAKEQECLDAAVDESVRCLEILMKDGLTKAQNRLHTFKAE.

Tyr18 is a tRNA binding site. Residue His23 is the Proton acceptor of the active site. Positions 69, 71, and 117 each coordinate tRNA.

Belongs to the PTH family. Monomer.

The protein resides in the cytoplasm. The enzyme catalyses an N-acyl-L-alpha-aminoacyl-tRNA + H2O = an N-acyl-L-amino acid + a tRNA + H(+). Hydrolyzes ribosome-free peptidyl-tRNAs (with 1 or more amino acids incorporated), which drop off the ribosome during protein synthesis, or as a result of ribosome stalling. In terms of biological role, catalyzes the release of premature peptidyl moieties from peptidyl-tRNA molecules trapped in stalled 50S ribosomal subunits, and thus maintains levels of free tRNAs and 50S ribosomes. In Vibrio cholerae serotype O1 (strain ATCC 39315 / El Tor Inaba N16961), this protein is Peptidyl-tRNA hydrolase.